Consider the following 906-residue polypeptide: Protein translocase subunit SecA (906 aa).

Residues Gln-89, Gly-107–Thr-111, and Asp-502 each bind ATP. The interval Val-868–Asn-887 is disordered. The Zn(2+) site is built by Cys-890, Cys-892, Cys-901, and His-902.

It belongs to the SecA family. As to quaternary structure, monomer and homodimer. Part of the essential Sec protein translocation apparatus which comprises SecA, SecYEG and auxiliary proteins SecDF-YajC and YidC. Zn(2+) serves as cofactor.

The protein localises to the cell inner membrane. It is found in the cytoplasm. The enzyme catalyses ATP + H2O + cellular proteinSide 1 = ADP + phosphate + cellular proteinSide 2.. Its function is as follows. Part of the Sec protein translocase complex. Interacts with the SecYEG preprotein conducting channel. Has a central role in coupling the hydrolysis of ATP to the transfer of proteins into and across the cell membrane, serving both as a receptor for the preprotein-SecB complex and as an ATP-driven molecular motor driving the stepwise translocation of polypeptide chains across the membrane. The chain is Protein translocase subunit SecA from Brucella melitensis biotype 1 (strain ATCC 23456 / CCUG 17765 / NCTC 10094 / 16M).